Consider the following 423-residue polypeptide: Serine--tRNA ligase (423 aa).

Thr-229–Glu-231 lines the L-serine pocket. ATP is bound at residue Arg-258–Glu-260. Glu-281 is an L-serine binding site. Position 345–348 (Glu-345–Ser-348) interacts with ATP. Ser-379 lines the L-serine pocket.

Belongs to the class-II aminoacyl-tRNA synthetase family. Type-1 seryl-tRNA synthetase subfamily. In terms of assembly, homodimer. The tRNA molecule binds across the dimer.

It is found in the cytoplasm. It carries out the reaction tRNA(Ser) + L-serine + ATP = L-seryl-tRNA(Ser) + AMP + diphosphate + H(+). The enzyme catalyses tRNA(Sec) + L-serine + ATP = L-seryl-tRNA(Sec) + AMP + diphosphate + H(+). It participates in aminoacyl-tRNA biosynthesis; selenocysteinyl-tRNA(Sec) biosynthesis; L-seryl-tRNA(Sec) from L-serine and tRNA(Sec): step 1/1. In terms of biological role, catalyzes the attachment of serine to tRNA(Ser). Is also able to aminoacylate tRNA(Sec) with serine, to form the misacylated tRNA L-seryl-tRNA(Sec), which will be further converted into selenocysteinyl-tRNA(Sec). This Methanosarcina barkeri (strain Fusaro / DSM 804) protein is Serine--tRNA ligase (serS1).